Reading from the N-terminus, the 1054-residue chain is FERM, ARHGEF and pleckstrin domain-containing protein 2 (1054 aa).

The region spanning 44–324 is the FERM domain; that stretch reads LHLRVKLLDN…EYHTFFRLLD (281 aa). Residues Ser389 and Ser439 each carry the phosphoserine modification. The tract at residues 421 to 527 is disordered; it reads EFKDSSSSLT…GAGMDCEEPR (107 aa). Low complexity predominate over residues 468-492; sequence PGPGLSTKSPQPSPSSRKSPLSLSP. The region spanning 535–726 is the DH domain; it reads EAYFIVKEIL…TEVTTTLQHI (192 aa). Residues 755–852 enclose the PH 1 domain; it reads EFIREGCLHK…WMLDLNSAIQ (98 aa). Residues 856–894 form a disordered region; the sequence is SGGDTAPALPGRTVCTRPPRSPNEVSLEQESEDDARGVR. The PH 2 domain occupies 929-1026; the sequence is ENQLSGYLLR…WMEVIQGASS (98 aa). The disordered stretch occupies residues 1029–1054; it reads GRAPSIVQDGPQPSSGLEGMVRGKEE.

As to quaternary structure, interacts with PLXNA1. Interaction with PLXNA1 or PIP5K1C lowers its guanine nucleotide exchange activity. Dissociates from PLXNA1 when SEMA3A binds to the receptor. Interacts with PIP5K1C via its FERM domain. The interaction with PIP5K1C is enhanced by SEMA3A binding. Interacts with RAC1.

In terms of biological role, functions as a guanine nucleotide exchange factor that activates RAC1. May have relatively low activity. Plays a role in the response to class 3 semaphorins and remodeling of the actin cytoskeleton. Plays a role in TNFSF11-mediated osteoclast differentiation, especially in podosome rearrangement and reorganization of the actin cytoskeleton. Regulates the activation of ITGB3, integrin signaling and cell adhesion. In Homo sapiens (Human), this protein is FERM, ARHGEF and pleckstrin domain-containing protein 2 (FARP2).